The chain runs to 1035 residues: NHS-like protein 3 (1035 aa).

A lipid anchor (N-myristoyl glycine) is attached at valine 2. 3 disordered regions span residues 23-44 (KAEN…AVDE), 76-105 (QEKQ…DEDN), and 133-162 (IQRK…RRST). A compositionally biased stretch (basic and acidic residues) spans 76–90 (QEKQKLNKGGWDHGD). Phosphoserine occurs at positions 93, 138, 145, and 161. A Phosphothreonine modification is found at threonine 162. A Phosphoserine modification is found at serine 215. Residue arginine 320 is modified to Asymmetric dimethylarginine. Phosphoserine is present on residues serine 322, serine 327, serine 330, serine 338, serine 339, serine 341, and serine 342. Disordered regions lie at residues 332–869 (RSLG…APSS) and 885–1035 (SEGL…KELA). The span at 338 to 365 (SSVSSPQPRSRHPSSSSDTWSHSQSSDT) shows a compositional bias: low complexity. Residues 366–388 (IVSDGSTLSSKGGSEGQPESSTA) are compositionally biased toward polar residues. 3 positions are modified to phosphoserine: serine 400, serine 404, and serine 409. Positions 411 to 429 (AEASDTLSIRSSGQLSGRS) are enriched in polar residues. Positions 431 to 449 (SLRKLKRPPPPPRRTHSLH) are enriched in basic residues. Positions 517 to 532 (RTLSPSSGYSSQSGTP) are enriched in low complexity. Threonine 531 carries the post-translational modification Phosphothreonine. Pro residues predominate over residues 543–552 (PASPGKAQPP). Serine 545 carries the phosphoserine modification. A compositionally biased stretch (low complexity) spans 562–589 (SPGASVSSSLTSLCSSSSDPAPSDRSGP). Phosphothreonine is present on threonine 593. Residues 602–624 (PPHPKVPAPFSPPPSKPRSPNPA) are compositionally biased toward pro residues. The residue at position 612 (serine 612) is a Phosphoserine. 2 stretches are compositionally biased toward low complexity: residues 625 to 645 (APAL…DASP) and 652 to 662 (QTTLTPLQESP). Serine 669 and serine 673 each carry phosphoserine. Composition is skewed to pro residues over residues 669–685 (SPPP…PPPT) and 709–718 (NWPPPPPPAP). Over residues 737–765 (SVASPEPAGPSGSPELVSSPAASSSSATA) the composition is skewed to low complexity. A compositionally biased stretch (pro residues) spans 771–784 (PGSPDPPPAPPAPA). A compositionally biased stretch (low complexity) spans 838–848 (GAPTPALGPSA). A phosphoserine mark is found at serine 858, serine 862, and serine 868. The span at 894-906 (NGPPEAEPRPPQS) shows a compositional bias: pro residues. 4 positions are modified to phosphoserine: serine 929, serine 959, serine 971, and serine 979. Positions 961–980 (KAPPPVARKPSVGVPPPASP) are enriched in pro residues. Residues 999–1008 (TQDRTKRELA) are compositionally biased toward basic and acidic residues.

Expressed in lung.

In terms of biological role, able to directly activate the TNF-NFkappaB signaling pathway. In Homo sapiens (Human), this protein is NHS-like protein 3.